A 413-amino-acid chain; its full sequence is Ras association domain-containing protein 5 (413 aa).

The interval 1 to 103 (MASPAIGQRP…RPRDVRSIFE (103 aa)) is disordered. Over residues 52-74 (SEDRGGRRSGRRDPEPTPRDCRH) the composition is skewed to basic and acidic residues. The segment at 117 to 165 (GHRFVELALRGGPGWCDLCGREVLRQALRCANCKFTCHSECRSLIQLDC) adopts a Phorbol-ester/DAG-type zinc-finger fold. 2 positions are modified to phosphoserine: S177 and S274. One can recognise a Ras-associating domain in the interval 265–359 (PAATTDKRTS…LSFVLKENET (95 aa)). Residue T347 is modified to Phosphothreonine. The SARAH domain maps to 361-408 (EVEWDAFSIPELQNFLTILEKEEQDKIHQLQKKYNKFRQKLEEALRES).

Interacts directly with activated HRAS; a RASSF5-STK4/MST1 complex probably associates with activated HRAS. Interacts with KRAS. Probably interacts with Ras-like GTPases RRAS, MRAS, RAP1B, RAP2A and RALA. Interacts with RRAS2. Can self-associate. Interacts with RSSF1 isoform A. The RSSF1 isoform A-RSSF5 heterodimer probably mediates the association of RSSF1 with HRAS. Isoform 2 interacts with activated RAP1A and ITGAL/LFA-1. Binds STK4/MST1, inhibiting STK4/MST1 autoactivation.

It is found in the cytoplasm. Its subcellular location is the cytoskeleton. Its function is as follows. Potential tumor suppressor. Seems to be involved in lymphocyte adhesion by linking RAP1A activation upon T-cell receptor or chemokine stimulation to integrin activation. Isoform 2 stimulates lymphocyte polarization and the patch-like distribution of ITGAL/LFA-1, resulting in an enhanced adhesion to ICAM1. Together with RAP1A may participate in regulation of microtubule growth. The association of isoform 2 with activated RAP1A is required for directional movement of endothelial cells during wound healing. May be involved in regulation of Ras apoptotic function. The RASSF5-STK4/MST1 complex may mediate HRAS and KRAS induced apoptosis. In Mus musculus (Mouse), this protein is Ras association domain-containing protein 5 (Rassf5).